Reading from the N-terminus, the 515-residue chain is tRNA-2-methylthio-N(6)-dimethylallyladenosine synthase (515 aa).

An MTTase N-terminal domain is found at 25-140 (KTYQVRTFGC…LPALLNRARH (116 aa)). Residues cysteine 34, cysteine 69, cysteine 103, cysteine 177, cysteine 181, and cysteine 184 each coordinate [4Fe-4S] cluster. A Radical SAM core domain is found at 163-393 (RDSVYAGWVS…TALQDRIAAE (231 aa)). The region spanning 396–466 (AKQLGRKVEV…AFHLVADPAG (71 aa)) is the TRAM domain. The disordered stretch occupies residues 482–515 (DRSQADSCGVPAAGAASGKAGVSLGMPSLPTRRA). Over residues 490 to 506 (GVPAAGAASGKAGVSLG) the composition is skewed to low complexity.

This sequence belongs to the methylthiotransferase family. MiaB subfamily. Monomer. Requires [4Fe-4S] cluster as cofactor.

Its subcellular location is the cytoplasm. The enzyme catalyses N(6)-dimethylallyladenosine(37) in tRNA + (sulfur carrier)-SH + AH2 + 2 S-adenosyl-L-methionine = 2-methylsulfanyl-N(6)-dimethylallyladenosine(37) in tRNA + (sulfur carrier)-H + 5'-deoxyadenosine + L-methionine + A + S-adenosyl-L-homocysteine + 2 H(+). Functionally, catalyzes the methylthiolation of N6-(dimethylallyl)adenosine (i(6)A), leading to the formation of 2-methylthio-N6-(dimethylallyl)adenosine (ms(2)i(6)A) at position 37 in tRNAs that read codons beginning with uridine. The chain is tRNA-2-methylthio-N(6)-dimethylallyladenosine synthase from Paenarthrobacter aurescens (strain TC1).